The sequence spans 63 residues: Cytochrome c oxidase subunit 7C, mitochondrial (63 aa).

A mitochondrion-targeting transit peptide spans 1 to 16 (MLGQSIRRFTTSVVRR). Over 17–33 (SHYEEGPGKNLPFSVEN) the chain is Mitochondrial matrix. The residue at position 25 (Lys-25) is an N6-acetyllysine; alternate. Residue Lys-25 is modified to N6-succinyllysine; alternate. A helical transmembrane segment spans residues 34 to 60 (KWRLLAMMTLYFGSGFAAPFFIVRHQL). Over 61–63 (LKK) the chain is Mitochondrial intermembrane.

This sequence belongs to the cytochrome c oxidase VIIc family. As to quaternary structure, component of the cytochrome c oxidase (complex IV, CIV), a multisubunit enzyme composed of 14 subunits. The complex is composed of a catalytic core of 3 subunits MT-CO1, MT-CO2 and MT-CO3, encoded in the mitochondrial DNA, and 11 supernumerary subunits COX4I, COX5A, COX5B, COX6A, COX6B, COX6C, COX7A, COX7B, COX7C, COX8 and NDUFA4, which are encoded in the nuclear genome. The complex exists as a monomer or a dimer and forms supercomplexes (SCs) in the inner mitochondrial membrane with NADH-ubiquinone oxidoreductase (complex I, CI) and ubiquinol-cytochrome c oxidoreductase (cytochrome b-c1 complex, complex III, CIII), resulting in different assemblies (supercomplex SCI(1)III(2)IV(1) and megacomplex MCI(2)III(2)IV(2)). Interacts with RAB5IF.

It localises to the mitochondrion inner membrane. The protein operates within energy metabolism; oxidative phosphorylation. Component of the cytochrome c oxidase, the last enzyme in the mitochondrial electron transport chain which drives oxidative phosphorylation. The respiratory chain contains 3 multisubunit complexes succinate dehydrogenase (complex II, CII), ubiquinol-cytochrome c oxidoreductase (cytochrome b-c1 complex, complex III, CIII) and cytochrome c oxidase (complex IV, CIV), that cooperate to transfer electrons derived from NADH and succinate to molecular oxygen, creating an electrochemical gradient over the inner membrane that drives transmembrane transport and the ATP synthase. Cytochrome c oxidase is the component of the respiratory chain that catalyzes the reduction of oxygen to water. Electrons originating from reduced cytochrome c in the intermembrane space (IMS) are transferred via the dinuclear copper A center (CU(A)) of subunit 2 and heme A of subunit 1 to the active site in subunit 1, a binuclear center (BNC) formed by heme A3 and copper B (CU(B)). The BNC reduces molecular oxygen to 2 water molecules using 4 electrons from cytochrome c in the IMS and 4 protons from the mitochondrial matrix. The protein is Cytochrome c oxidase subunit 7C, mitochondrial (COX7C) of Sus scrofa (Pig).